A 363-amino-acid polypeptide reads, in one-letter code: Methylthioribose-1-phosphate isomerase (363 aa).

Aspartate 253 acts as the Proton donor in catalysis.

The protein belongs to the eIF-2B alpha/beta/delta subunits family. MtnA subfamily.

It is found in the cytoplasm. It localises to the nucleus. It catalyses the reaction 5-(methylsulfanyl)-alpha-D-ribose 1-phosphate = 5-(methylsulfanyl)-D-ribulose 1-phosphate. Its pathway is amino-acid biosynthesis; L-methionine biosynthesis via salvage pathway; L-methionine from S-methyl-5-thio-alpha-D-ribose 1-phosphate: step 1/6. Functionally, catalyzes the interconversion of methylthioribose-1-phosphate (MTR-1-P) into methylthioribulose-1-phosphate (MTRu-1-P). The sequence is that of Methylthioribose-1-phosphate isomerase from Drosophila grimshawi (Hawaiian fruit fly).